A 215-amino-acid chain; its full sequence is Cytochrome c biogenesis ATP-binding export protein CcmA (215 aa).

The ABC transporter domain maps to 3–215 (LEAENLAGER…MAAFSVEDIA (213 aa)). Residue 35–42 (GPNGSGKS) coordinates ATP.

The protein belongs to the ABC transporter superfamily. CcmA exporter (TC 3.A.1.107) family. The complex is composed of two ATP-binding proteins (CcmA) and two transmembrane proteins (CcmB).

Its subcellular location is the cell inner membrane. It catalyses the reaction heme b(in) + ATP + H2O = heme b(out) + ADP + phosphate + H(+). Its function is as follows. Part of the ABC transporter complex CcmAB involved in the biogenesis of c-type cytochromes; once thought to export heme, this seems not to be the case, but its exact role is uncertain. Responsible for energy coupling to the transport system. In Brucella melitensis biotype 1 (strain ATCC 23456 / CCUG 17765 / NCTC 10094 / 16M), this protein is Cytochrome c biogenesis ATP-binding export protein CcmA.